The chain runs to 485 residues: Glutamyl-tRNA(Gln) amidotransferase subunit A (485 aa).

Residues Lys76 and Ser151 each act as charge relay system in the active site. Residue Ser175 is the Acyl-ester intermediate of the active site.

It belongs to the amidase family. GatA subfamily. In terms of assembly, heterotrimer of A, B and C subunits.

The enzyme catalyses L-glutamyl-tRNA(Gln) + L-glutamine + ATP + H2O = L-glutaminyl-tRNA(Gln) + L-glutamate + ADP + phosphate + H(+). Functionally, allows the formation of correctly charged Gln-tRNA(Gln) through the transamidation of misacylated Glu-tRNA(Gln) in organisms which lack glutaminyl-tRNA synthetase. The reaction takes place in the presence of glutamine and ATP through an activated gamma-phospho-Glu-tRNA(Gln). The polypeptide is Glutamyl-tRNA(Gln) amidotransferase subunit A (Methylococcus capsulatus (strain ATCC 33009 / NCIMB 11132 / Bath)).